Here is a 1341-residue protein sequence, read N- to C-terminus: WD repeat-containing protein 19 (1341 aa).

WD repeat units lie at residues 11–51, 52–92, 95–134, 137–175, 273–311, and 317–356; these read SWLG…RSEI, SLPG…TSQL, GMRDQMSFLLWSKIGSFLAVGTIKGNLLIYNHQTSRKIPV, KHTKKITCGCWNSENLLALGGEDKMITVSNQEGDTIRQT, DHKDNLTSVALSQTLNKAATCGDNCIKIHDLTELRDMYA, and DENKGLGTLSWTDDGQLLALSTQRGSLHVFLTKLPILGDA. TPR repeat units lie at residues 736–769, 775–808, 840–873, 895–928, 951–984, and 1020–1053; these read AQDLYLASNCPVAALEMRRDLQHWDSALQLAKRL, PFISKEYAIQLEFTGDYVNALAHYEKGITGDNKE, RVLKRDCGAILENMKQFSEAAQLYEKGQYYDRAA, PKIHLQYAKAKEADGRYKEAVVAYENAKQWNSVI, LDGAKMVARFFLQLGDYGSAIQFLVLSKCNNEAF, and EKRHFQAGKFFLLCGQYSRALKHFLKCPSSEDNV.

As to quaternary structure, component of the IFT complex A (IFT-A) complex. IFT-A complex is divided into a core subcomplex composed of IFT122:IFT140:WDR19 which is associated with TULP3 and a peripheral subcomplex composed of IFT43:WDR35:TTC21B. Interacts (via C-terminal region) with IFT122 (via C-terminal region). Interacts with BBS1. Interacts with TTC25. In terms of tissue distribution, tissue-specific expression of isoforms. Expressed in the prostate, testis, epididymis, submaxillary and salivary glands. Expressed in ependymal cells lining brain ventricles (at protein level).

The protein resides in the cell projection. The protein localises to the cilium. Its subcellular location is the cytoplasm. It is found in the cytoskeleton. It localises to the cilium basal body. The protein resides in the photoreceptor outer segment. The protein localises to the flagellum. As component of the IFT complex A (IFT-A), a complex required for retrograde ciliary transport and entry into cilia of G protein-coupled receptors (GPCRs), it is involved in cilia function and/or assembly. Essential for functional IFT-A assembly and ciliary entry of GPCRs. Associates with the BBSome complex to mediate ciliary transport. This is WD repeat-containing protein 19 from Mus musculus (Mouse).